The primary structure comprises 885 residues: Alanine--tRNA ligase (885 aa).

4 residues coordinate Zn(2+): His-574, His-578, Cys-676, and His-680.

Belongs to the class-II aminoacyl-tRNA synthetase family. Zn(2+) is required as a cofactor.

The protein localises to the cytoplasm. It carries out the reaction tRNA(Ala) + L-alanine + ATP = L-alanyl-tRNA(Ala) + AMP + diphosphate. In terms of biological role, catalyzes the attachment of alanine to tRNA(Ala) in a two-step reaction: alanine is first activated by ATP to form Ala-AMP and then transferred to the acceptor end of tRNA(Ala). Also edits incorrectly charged Ser-tRNA(Ala) and Gly-tRNA(Ala) via its editing domain. This Syntrophobacter fumaroxidans (strain DSM 10017 / MPOB) protein is Alanine--tRNA ligase.